The following is a 415-amino-acid chain: Serine hydroxymethyltransferase 2 (415 aa).

Residues leucine 121 and 125–127 (GHL) each bind (6S)-5,6,7,8-tetrahydrofolate. An N6-(pyridoxal phosphate)lysine modification is found at lysine 229.

The protein belongs to the SHMT family. Homodimer. The cofactor is pyridoxal 5'-phosphate.

Its subcellular location is the cytoplasm. The catalysed reaction is (6R)-5,10-methylene-5,6,7,8-tetrahydrofolate + glycine + H2O = (6S)-5,6,7,8-tetrahydrofolate + L-serine. It participates in one-carbon metabolism; tetrahydrofolate interconversion. Its pathway is amino-acid biosynthesis; glycine biosynthesis; glycine from L-serine: step 1/1. In terms of biological role, catalyzes the reversible interconversion of serine and glycine with tetrahydrofolate (THF) serving as the one-carbon carrier. This reaction serves as the major source of one-carbon groups required for the biosynthesis of purines, thymidylate, methionine, and other important biomolecules. Also exhibits THF-independent aldolase activity toward beta-hydroxyamino acids, producing glycine and aldehydes, via a retro-aldol mechanism. The protein is Serine hydroxymethyltransferase 2 of Bordetella bronchiseptica (strain ATCC BAA-588 / NCTC 13252 / RB50) (Alcaligenes bronchisepticus).